The sequence spans 62 residues: Large ribosomal subunit protein bL28 (62 aa).

This sequence belongs to the bacterial ribosomal protein bL28 family.

The protein is Large ribosomal subunit protein bL28 of Aster yellows witches'-broom phytoplasma (strain AYWB).